Here is a 362-residue protein sequence, read N- to C-terminus: Beta-ketoacyl-[acyl-carrier-protein] synthase III 2 (362 aa).

Catalysis depends on residues Cys-113 and His-251. Positions 252–256 (QANIR) are ACP-binding. Asn-281 is an active-site residue.

This sequence belongs to the thiolase-like superfamily. FabH family. In terms of assembly, homodimer.

The protein resides in the cytoplasm. The catalysed reaction is malonyl-[ACP] + acetyl-CoA + H(+) = 3-oxobutanoyl-[ACP] + CO2 + CoA. Its pathway is lipid metabolism; fatty acid biosynthesis. Catalyzes the condensation reaction of fatty acid synthesis by the addition to an acyl acceptor of two carbons from malonyl-ACP. Catalyzes the first condensation reaction which initiates fatty acid synthesis and may therefore play a role in governing the total rate of fatty acid production. Possesses both acetoacetyl-ACP synthase and acetyl transacylase activities. Its substrate specificity determines the biosynthesis of branched-chain and/or straight-chain of fatty acids. This chain is Beta-ketoacyl-[acyl-carrier-protein] synthase III 2, found in Vibrio cholerae serotype O1 (strain ATCC 39315 / El Tor Inaba N16961).